We begin with the raw amino-acid sequence, 219 residues long: 2-hydroxy-3-keto-5-methylthiopentenyl-1-phosphate phosphatase (219 aa).

This sequence belongs to the HAD-like hydrolase superfamily. MtnX family.

The catalysed reaction is 2-hydroxy-5-methylsulfanyl-3-oxopent-1-enyl phosphate + H2O = 1,2-dihydroxy-5-(methylsulfanyl)pent-1-en-3-one + phosphate. The protein operates within amino-acid biosynthesis; L-methionine biosynthesis via salvage pathway; L-methionine from S-methyl-5-thio-alpha-D-ribose 1-phosphate: step 4/6. Dephosphorylates 2-hydroxy-3-keto-5-methylthiopentenyl-1-phosphate (HK-MTPenyl-1-P) yielding 1,2-dihydroxy-3-keto-5-methylthiopentene (DHK-MTPene). In Bacillus cereus (strain ZK / E33L), this protein is 2-hydroxy-3-keto-5-methylthiopentenyl-1-phosphate phosphatase.